Here is a 183-residue protein sequence, read N- to C-terminus: Probable calcium-binding protein CML47 (183 aa).

2 EF-hand domains span residues 112-147 (MGKE…LGYD) and 149-183 (CTKM…KSFS). Ca(2+) contacts are provided by Asp-125, Asn-127, Asp-129, Glu-136, Asp-162, Asn-164, Asp-166, Lys-168, and Glu-173.

Its function is as follows. Potential calcium sensor. This is Probable calcium-binding protein CML47 (CML47) from Arabidopsis thaliana (Mouse-ear cress).